The following is a 704-amino-acid chain: Elongation factor G (704 aa).

A tr-type G domain is found at 8–291 (DKVRNIGIMA…AVVEYLASPV (284 aa)). Residues 17 to 24 (AHIDAGKT), 90 to 94 (DTPGH), and 144 to 147 (NKMD) contribute to the GTP site.

The protein belongs to the TRAFAC class translation factor GTPase superfamily. Classic translation factor GTPase family. EF-G/EF-2 subfamily.

Its subcellular location is the cytoplasm. Its function is as follows. Catalyzes the GTP-dependent ribosomal translocation step during translation elongation. During this step, the ribosome changes from the pre-translocational (PRE) to the post-translocational (POST) state as the newly formed A-site-bound peptidyl-tRNA and P-site-bound deacylated tRNA move to the P and E sites, respectively. Catalyzes the coordinated movement of the two tRNA molecules, the mRNA and conformational changes in the ribosome. The chain is Elongation factor G from Pelodictyon phaeoclathratiforme (strain DSM 5477 / BU-1).